The chain runs to 424 residues: Double-stranded RNA-binding protein 8 (424 aa).

Over residues 1-10 (MDMPPTPLPP) the composition is skewed to pro residues. Residues 1-22 (MDMPPTPLPPETANTSPAPNGA) form a disordered region. DRBM domains are found at residues 33 to 102 (VFKS…EIVK) and 118 to 185 (LCKN…AIQG). 2 stretches are compositionally biased toward basic and acidic residues: residues 287 to 308 (KRVE…ENQH) and 318 to 328 (DEARVEQEPSR). The disordered stretch occupies residues 287–330 (KRVEAEPPRDIEMVQPDKENQHSDAALVQPDDEARVEQEPSRDI).

In terms of biological role, binds double-stranded RNA. In Oryza sativa subsp. japonica (Rice), this protein is Double-stranded RNA-binding protein 8 (DRB8).